Reading from the N-terminus, the 571-residue chain is Dehydrocurvularin exporter (571 aa).

Residues 1-34 (MADGSDLENNHKPELDRSQPGSTSNGSQEQKDPD) form a disordered region. The segment covering 8 to 17 (ENNHKPELDR) has biased composition (basic and acidic residues). The segment covering 19–28 (QPGSTSNGSQ) has biased composition (polar residues). A glycan (N-linked (GlcNAc...) asparagine) is linked at Asn-25. A run of 14 helical transmembrane segments spans residues 47-67 (ILVMFTIFVSTILVSLEIGII), 86-106 (WYGSATFILAAAASPLWGKLF), 120-140 (FIFLVGSIVAAAAPNSVSVII), 143-163 (AIQGWGASGVLGGTLIVINYV), 171-191 (LLIGTWMAVFMVSTILGPVIG), 202-222 (WCFWINLPVGGPIIVLLLLFL), 238-258 (IILALDLPGFCLLLVSLVCLT), 275-295 (VIATLVMWIVLSIAFLVTEWF), 317-337 (LFCLISYAALYQVMFYLPIYF), 350-370 (VNTLPFLAFFALGAVVSGGVI), 379-399 (FELLGALIMTAGMALIYILDV), 405-425 (MYIGAEVLFGFGVGICNQIPM), 443-463 (IMVMCQTLSGAYFVAIAQSLF), and 514-534 (VFAFSLACAAFAVLLSLIIPF). The interval 538–571 (PDHGKKDKPATEEAAEEKSEAEGKVSGDKEENHS) is disordered.

It belongs to the major facilitator superfamily. TCR/Tet family.

It is found in the cell membrane. Its function is as follows. Efflux pump that is probably involved in the export of dehydrocurvularin. This Aspergillus terreus protein is Dehydrocurvularin exporter.